Here is a 200-residue protein sequence, read N- to C-terminus: Holliday junction resolvase RecU (200 aa).

Residues 1–27 (MALKYPSGKEYRGNKPNAARRPAADYA) form a disordered region. The Mg(2+) site is built by T84, D86, E99, and Q118.

This sequence belongs to the RecU family. As to quaternary structure, homodimer. It depends on Mg(2+) as a cofactor.

Its subcellular location is the cytoplasm. It catalyses the reaction Endonucleolytic cleavage at a junction such as a reciprocal single-stranded crossover between two homologous DNA duplexes (Holliday junction).. Endonuclease that resolves Holliday junction intermediates in genetic recombination. Cleaves mobile four-strand junctions by introducing symmetrical nicks in paired strands. Promotes annealing of linear ssDNA with homologous dsDNA. Required for DNA repair, homologous recombination and chromosome segregation. In Geobacillus kaustophilus (strain HTA426), this protein is Holliday junction resolvase RecU.